A 518-amino-acid chain; its full sequence is Nuclear receptor ROR-gamma (518 aa).

A modulating region spans residues 1–30; sequence MDRAPQRQHQASRELLAAKKTHTSQIEVIP. 2 consecutive NR C4-type zinc fingers follow at residues 31–51 and 67–91; these read CKIC…CEGC and CTRQ…LQKC. Positions 31–96 form a DNA-binding region, nuclear receptor; it reads CKICGDKSSG…RLQKCLALGM (66 aa). Disordered regions lie at residues 105 to 183 and 238 to 258; these read RMSK…SGSG and HPGL…SFRS. Residues 109-118 are compositionally biased toward basic and acidic residues; the sequence is KQRDSLHAEV. Over residues 119–130 the composition is skewed to low complexity; it reads QKQLQQRQQQQQ. The 240-residue stretch at 269-508 folds into the NR LBD domain; sequence EIEHLVQSVC…PPLYKELFST (240 aa). An AF-2 motif is present at residues 501–506; sequence LYKELF.

It belongs to the nuclear hormone receptor family. NR1 subfamily. In terms of assembly, interacts (via AF-2 motif) with the coactivators NCOA1, NCOA2 and PPARGC1A (via LXXLL motif). Interacts with the corepressor NCOR1. Interacts with CRY1. Interacts (via AF-2 motif) with PROX1. Interacts with FOXP3. Interacts with NR0B2.

The protein localises to the nucleus. Functionally, nuclear receptor that binds DNA as a monomer to ROR response elements (RORE) containing a single core motif half-site 5'-AGGTCA-3' preceded by a short A-T-rich sequence. Key regulator of cellular differentiation, immunity, peripheral circadian rhythm as well as lipid, steroid, xenobiotics and glucose metabolism. Considered to have intrinsic transcriptional activity, have some natural ligands like oxysterols that act as agonists (25-hydroxycholesterol) or inverse agonists (7-oxygenated sterols), enhancing or repressing the transcriptional activity, respectively. Recruits distinct combinations of cofactors to target gene regulatory regions to modulate their transcriptional expression, depending on the tissue, time and promoter contexts. Regulates the circadian expression of clock genes such as CRY1, BMAL1 and NR1D1 in peripheral tissues and in a tissue-selective manner. Competes with NR1D1 for binding to their shared DNA response element on some clock genes such as BMAL1, CRY1 and NR1D1 itself, resulting in NR1D1-mediated repression or RORC-mediated activation of the expression, leading to the circadian pattern of clock genes expression. Therefore influences the period length and stability of the clock. Involved in the regulation of the rhythmic expression of genes involved in glucose and lipid metabolism, including PLIN2 and AVPR1A. Negative regulator of adipocyte differentiation through the regulation of early phase genes expression, such as MMP3. Controls adipogenesis as well as adipocyte size and modulates insulin sensitivity in obesity. In liver, has specific and redundant functions with RORA as positive or negative modulator of expression of genes encoding phase I and Phase II proteins involved in the metabolism of lipids, steroids and xenobiotics, such as SULT1E1. Also plays a role in the regulation of hepatocyte glucose metabolism through the regulation of G6PC1 and PCK1. Essential for thymopoiesis and the development of several secondary lymphoid tissues, including lymph nodes and Peyer's patches. Required for the generation of LTi (lymphoid tissue inducer) cells. Regulates thymocyte survival through DNA-binding on ROREs of target gene promoter regions and recruitment of coactivaros via the AF-2. Also plays a key role, downstream of IL6 and TGFB and synergistically with RORA, for lineage specification of uncommitted CD4(+) T-helper (T(H)) cells into T(H)17 cells, antagonizing the T(H)1 program. Probably regulates IL17 and IL17F expression on T(H) by binding to the essential enhancer conserved non-coding sequence 2 (CNS2) in the IL17-IL17F locus. May also play a role in the pre-TCR activation cascade leading to the maturation of alpha/beta T-cells and may participate in the regulation of DNA accessibility in the TCR-J(alpha) locus. Regulates the rhythmic expression of PROX1 and promotes its nuclear localization. Plays an indispensable role in the induction of IFN-gamma dependent anti-mycobacterial systemic immunity. The protein is Nuclear receptor ROR-gamma (RORC) of Pongo abelii (Sumatran orangutan).